A 93-amino-acid chain; its full sequence is Small ribosomal subunit protein uS19 (93 aa).

The protein belongs to the universal ribosomal protein uS19 family.

Functionally, protein S19 forms a complex with S13 that binds strongly to the 16S ribosomal RNA. In Parafrankia sp. (strain EAN1pec), this protein is Small ribosomal subunit protein uS19.